A 317-amino-acid polypeptide reads, in one-letter code: MDSNNQIEPCLSRKSSEGKPQIFTTLRNIDLNLLTIFEAVYVHKGIVNAAKVLNLTPSAISQSIQKLRVIFPDPLFIRKGQGVTPTAFAMHLHEYISQGLESILGALDIEGSYDKQRTITIATTPSVGALVLPVIYRAIKTHYPQLLLRNPPISDAENQLSQFQTDLIIDNMFCTNRTVQHHVLFTDNMVLICREGNPLLSLEDDRETIDNAAHVLLLPEEQNFSGLRQRVQEMFPDRQINFTSYNILTIAALVANSDMLAIIPSRFYNLFSRCWPLEKLPFPSLNEEQIDFSIHYNKFSLRDPILHGVIDVIRNAF.

One can recognise an HTH lysR-type domain in the interval Ile29–Thr86. The segment at residues Ile46 to Gln65 is a DNA-binding region (H-T-H motif).

It belongs to the LysR transcriptional regulatory family.

This is an uncharacterized protein from Escherichia coli (strain K12).